A 266-amino-acid polypeptide reads, in one-letter code: GATA zinc finger domain-containing protein 1 (266 aa).

Residues 9–33 (CSMCKTTSSSMWKKSPQGEILCHHC) form a GATA-type zinc finger. Residues 59-72 (TTTFATTSAGPSQS) are compositionally biased toward low complexity. Residues 59-112 (TTTFATTSAGPSQSNGGGGGKQSKQEIHRRSARLRNTKYKSAPAAEKKVSTKGK) form a disordered region. Lys259 is covalently cross-linked (Glycyl lysine isopeptide (Lys-Gly) (interchain with G-Cter in SUMO2)).

Component of a chromatin complex, at least composed of KDM5A, GATAD1 and EMSY. In terms of tissue distribution, expressed in the eye (lens, ciliary body, retina, sclera and conjunctiva) at postnatal day 2 and 10. Not detected anywhere at postnatal day 14.

It localises to the nucleus. Its function is as follows. Component of some chromatin complex recruited to chromatin sites methylated 'Lys-4' of histone H3 (H3K4me), with a preference for trimethylated form (H3K4me3). The sequence is that of GATA zinc finger domain-containing protein 1 (Gatad1) from Mus musculus (Mouse).